The following is a 151-amino-acid chain: CD-NTase-associated protein 19 (151 aa).

Transmembrane regions (helical) follow at residues 25-45 (TVFNFYIAITGLLAAGIGVTL), 52-72 (VLFTSLMGVFVAFISFIFWKL), and 127-147 (ISFVIVGFTGILLAITPFLMK).

This sequence belongs to the Cap19 family.

The protein localises to the cell inner membrane. Membrane protein component of a CBASS (cyclic oligonucleotide-based antiphage signaling system) which provides immunity against bacteriophage. The CD-NTase protein synthesizes cyclic nucleotides in response to infection; these serve as specific second messenger signals. The signals activate a diverse range of effectors, leading to bacterial cell death and thus abortive phage infection. A type III CBASS system. Expression of this CBASS system (Cap17-CapW-CdnC-Cap7-Cap6-Cap18-Cap19) in a susceptible E.coli (strain JP313) confers resistance to bacteriophage lambda cI-. This is CD-NTase-associated protein 19 from Escherichia coli.